The primary structure comprises 796 residues: Protein tyrosine phosphatase domain-containing protein 1 (796 aa).

The region spanning Tyr-126–Cys-297 is the Tyrosine-protein phosphatase domain. Cys-234 functions as the Phosphocysteine intermediate in the catalytic mechanism. Ser-435 and Ser-437 each carry phosphoserine.

It belongs to the protein-tyrosine phosphatase family. Non-receptor class PTPDC1 subfamily.

May play roles in cilia formation and/or maintenance. The sequence is that of Protein tyrosine phosphatase domain-containing protein 1 (PTPDC1) from Bos taurus (Bovine).